The primary structure comprises 154 residues: Putative pre-16S rRNA nuclease (154 aa).

This sequence belongs to the YqgF nuclease family.

It is found in the cytoplasm. Could be a nuclease involved in processing of the 5'-end of pre-16S rRNA. This chain is Putative pre-16S rRNA nuclease, found in Rickettsia bellii (strain OSU 85-389).